A 397-amino-acid polypeptide reads, in one-letter code: Acetate kinase (397 aa).

A Mg(2+)-binding site is contributed by Asn-7. Lys-14 provides a ligand contact to ATP. Arg-90 serves as a coordination point for substrate. Asp-147 (proton donor/acceptor) is an active-site residue. ATP contacts are provided by residues 207 to 211, 282 to 284, and 330 to 334; these read HLGNG, DFR, and GLGEN. Residue Glu-383 coordinates Mg(2+).

The protein belongs to the acetokinase family. As to quaternary structure, homodimer. Requires Mg(2+) as cofactor. It depends on Mn(2+) as a cofactor.

It is found in the cytoplasm. The enzyme catalyses acetate + ATP = acetyl phosphate + ADP. Its pathway is metabolic intermediate biosynthesis; acetyl-CoA biosynthesis; acetyl-CoA from acetate: step 1/2. Catalyzes the formation of acetyl phosphate from acetate and ATP. Can also catalyze the reverse reaction. The chain is Acetate kinase from Clostridium botulinum (strain Okra / Type B1).